The primary structure comprises 160 residues: Ribosomal RNA large subunit methyltransferase H (160 aa).

S-adenosyl-L-methionine-binding residues include Leu76 and Gly108.

This sequence belongs to the RNA methyltransferase RlmH family. As to quaternary structure, homodimer.

It is found in the cytoplasm. It catalyses the reaction pseudouridine(1915) in 23S rRNA + S-adenosyl-L-methionine = N(3)-methylpseudouridine(1915) in 23S rRNA + S-adenosyl-L-homocysteine + H(+). In terms of biological role, specifically methylates the pseudouridine at position 1915 (m3Psi1915) in 23S rRNA. The polypeptide is Ribosomal RNA large subunit methyltransferase H (Bradyrhizobium sp. (strain BTAi1 / ATCC BAA-1182)).